Here is a 227-residue protein sequence, read N- to C-terminus: Cytochrome c oxidase subunit 2 (227 aa).

Residues Met-1–Ser-14 are Mitochondrial intermembrane-facing. The helical transmembrane segment at Pro-15 to Met-45 threads the bilayer. The Mitochondrial matrix segment spans residues Leu-46 to Gln-59. Residues Glu-60–Met-87 form a helical membrane-spanning segment. At Asp-88–Ile-227 the chain is on the mitochondrial intermembrane side. Residues His-161, Cys-196, Glu-198, Cys-200, His-204, and Met-207 each contribute to the Cu cation site. Glu-198 is a binding site for Mg(2+). Tyr-218 carries the post-translational modification Phosphotyrosine.

Belongs to the cytochrome c oxidase subunit 2 family. As to quaternary structure, component of the cytochrome c oxidase (complex IV, CIV), a multisubunit enzyme composed of 14 subunits. The complex is composed of a catalytic core of 3 subunits MT-CO1, MT-CO2 and MT-CO3, encoded in the mitochondrial DNA, and 11 supernumerary subunits COX4I, COX5A, COX5B, COX6A, COX6B, COX6C, COX7A, COX7B, COX7C, COX8 and NDUFA4, which are encoded in the nuclear genome. The complex exists as a monomer or a dimer and forms supercomplexes (SCs) in the inner mitochondrial membrane with NADH-ubiquinone oxidoreductase (complex I, CI) and ubiquinol-cytochrome c oxidoreductase (cytochrome b-c1 complex, complex III, CIII), resulting in different assemblies (supercomplex SCI(1)III(2)IV(1) and megacomplex MCI(2)III(2)IV(2)). Found in a complex with TMEM177, COA6, COX18, COX20, SCO1 and SCO2. Interacts with TMEM177 in a COX20-dependent manner. Interacts with COX20. Interacts with COX16. Cu cation serves as cofactor.

It is found in the mitochondrion inner membrane. It carries out the reaction 4 Fe(II)-[cytochrome c] + O2 + 8 H(+)(in) = 4 Fe(III)-[cytochrome c] + 2 H2O + 4 H(+)(out). In terms of biological role, component of the cytochrome c oxidase, the last enzyme in the mitochondrial electron transport chain which drives oxidative phosphorylation. The respiratory chain contains 3 multisubunit complexes succinate dehydrogenase (complex II, CII), ubiquinol-cytochrome c oxidoreductase (cytochrome b-c1 complex, complex III, CIII) and cytochrome c oxidase (complex IV, CIV), that cooperate to transfer electrons derived from NADH and succinate to molecular oxygen, creating an electrochemical gradient over the inner membrane that drives transmembrane transport and the ATP synthase. Cytochrome c oxidase is the component of the respiratory chain that catalyzes the reduction of oxygen to water. Electrons originating from reduced cytochrome c in the intermembrane space (IMS) are transferred via the dinuclear copper A center (CU(A)) of subunit 2 and heme A of subunit 1 to the active site in subunit 1, a binuclear center (BNC) formed by heme A3 and copper B (CU(B)). The BNC reduces molecular oxygen to 2 water molecules using 4 electrons from cytochrome c in the IMS and 4 protons from the mitochondrial matrix. This chain is Cytochrome c oxidase subunit 2, found in Rattus norvegicus (Rat).